The primary structure comprises 369 residues: Endophilin-A (369 aa).

Residues 18 to 248 (TEKMGGAEGT…LQEKRSEAES (231 aa)) enclose the BAR domain. Positions 227–247 (QCADVLRGLQETLQEKRSEAE) form a coiled coil. A compositionally biased stretch (low complexity) spans 275 to 294 (GTPSHISSSASPLPSPMRSP). A disordered region spans residues 275 to 296 (GTPSHISSSASPLPSPMRSPAK). The 60-residue stretch at 305–364 (QQQPCCQALYDFDPENPGELGFKENDIITLLNRVDDNWYEGAVNGRTGYFPQSYVQVQVP) folds into the SH3 domain.

This sequence belongs to the endophilin family.

Its subcellular location is the cytoplasm. It localises to the membrane. In terms of biological role, required presynaptically at the neuromuscular junction. Implicated in synaptic vesicle endocytosis. In Drosophila pseudoobscura pseudoobscura (Fruit fly), this protein is Endophilin-A.